The sequence spans 283 residues: Acetylglutamate kinase (283 aa).

Residues 64-65 (GG), arginine 86, and asparagine 178 each bind substrate.

Belongs to the acetylglutamate kinase family. ArgB subfamily.

It is found in the cytoplasm. It carries out the reaction N-acetyl-L-glutamate + ATP = N-acetyl-L-glutamyl 5-phosphate + ADP. It participates in amino-acid biosynthesis; L-arginine biosynthesis; N(2)-acetyl-L-ornithine from L-glutamate: step 2/4. Functionally, catalyzes the ATP-dependent phosphorylation of N-acetyl-L-glutamate. This chain is Acetylglutamate kinase, found in Lactococcus lactis subsp. cremoris (strain SK11).